We begin with the raw amino-acid sequence, 109 residues long: Thioredoxin (109 aa).

In terms of domain architecture, Thioredoxin spans 2 to 109 (TNCIVELTDG…LKDFLNLYLK (108 aa)). Cys33 and Cys36 are disulfide-bonded.

This sequence belongs to the thioredoxin family.

Functionally, participates in various redox reactions through the reversible oxidation of its active center dithiol to a disulfide and catalyzes dithiol-disulfide exchange reactions. This is Thioredoxin (trxA) from Buchnera aphidicola subsp. Baizongia pistaciae (strain Bp).